The following is a 118-amino-acid chain: DNA polymerase epsilon subunit 4 (118 aa).

2 stretches are compositionally biased toward low complexity: residues 1–11 (MAAAAAAGSGT) and 19–35 (GGEA…SAPG). Residues 1–37 (MAAAAAAGSGTPREEEAPGGEAAASQAQAPTSAPGGV) are disordered. Ala2 carries the post-translational modification N-acetylalanine. Thr11 is subject to Phosphothreonine. At Ser25 the chain carries Phosphoserine.

Component of the DNA polymerase epsilon complex consisting of four subunits: the catalytic subunit POLE and the accessory subunits POLE2, POLE3 and POLE4. Interaction with POLE3 is a prerequisite for further binding with POLE and POLE2.

It localises to the nucleus. In terms of biological role, accessory component of the DNA polymerase epsilon complex. Participates in DNA repair and in chromosomal DNA replication. This Mus musculus (Mouse) protein is DNA polymerase epsilon subunit 4 (Pole4).